The primary structure comprises 366 residues: Chorismate synthase (366 aa).

Arg-48 is a binding site for NADP(+). FMN contacts are provided by residues 125–127, Gly-285, 300–304, and Arg-327; these read RSS and KPTPS.

It belongs to the chorismate synthase family. Requires FMNH2 as cofactor.

The enzyme catalyses 5-O-(1-carboxyvinyl)-3-phosphoshikimate = chorismate + phosphate. It participates in metabolic intermediate biosynthesis; chorismate biosynthesis; chorismate from D-erythrose 4-phosphate and phosphoenolpyruvate: step 7/7. Catalyzes the anti-1,4-elimination of the C-3 phosphate and the C-6 proR hydrogen from 5-enolpyruvylshikimate-3-phosphate (EPSP) to yield chorismate, which is the branch point compound that serves as the starting substrate for the three terminal pathways of aromatic amino acid biosynthesis. This reaction introduces a second double bond into the aromatic ring system. The polypeptide is Chorismate synthase (Methanococcoides burtonii (strain DSM 6242 / NBRC 107633 / OCM 468 / ACE-M)).